The primary structure comprises 310 residues: uncharacterized protein (310 aa).

Residues 1-70 (MAGNSQRRGA…ARGRTDETET (70 aa)) are disordered. A compositionally biased stretch (basic residues) spans 49 to 62 (AAKRAKAQQRRPAR). Glycine 262, valine 282, and leucine 291 together coordinate S-adenosyl-L-methionine.

It belongs to the class IV-like SAM-binding methyltransferase superfamily. RNA methyltransferase TrmH family.

This is an uncharacterized protein from Mycobacterium marinum (strain ATCC BAA-535 / M).